Consider the following 391-residue polypeptide: Pepsin B (391 aa).

The N-terminal stretch at 1–16 is a signal peptide; sequence MKCLILALICLQLSEG. Positions 17–60 are cleaved as a propeptide — activation peptide; sequence LVVRQILHKGKSIRERMEENGVLEDFLRYNKKADPAAKFLFNKD. One can recognise a Peptidase A1 domain in the interval 75–388; that stretch reads YFGEISIGTP…DMANNRVGFA (314 aa). Aspartate 93 is a catalytic residue. 2 disulfides stabilise this stretch: cysteine 106/cysteine 111 and cysteine 270/cysteine 274. Residue aspartate 279 is part of the active site. Cysteine 313 and cysteine 346 are disulfide-bonded.

Belongs to the peptidase A1 family.

It is found in the secreted. The enzyme catalyses Degradation of gelatin, little activity on hemoglobin. Specificity on B chain of insulin more restricted than that of pepsin A. Does not cleave 1-Phe-|-Val-2, 4-Gln-|-His-5 or 23-Gly-|-Phe-24.. In terms of biological role, hydrolyzes various peptides including beta-endorphin, insulin B chain, dynorphin A, and neurokinin A, with high specificity for the cleavage of the Phe-Xaa bonds. The polypeptide is Pepsin B (Monodelphis domestica (Gray short-tailed opossum)).